A 428-amino-acid chain; its full sequence is Type II methyltransferase M.TthHB8I (428 aa).

Residues 407–428 are disordered; the sequence is RKGNTERRKHGPYTSPESAGSF.

It belongs to the N(4)/N(6)-methyltransferase family.

The catalysed reaction is a 2'-deoxyadenosine in DNA + S-adenosyl-L-methionine = an N(6)-methyl-2'-deoxyadenosine in DNA + S-adenosyl-L-homocysteine + H(+). In terms of biological role, a gamma subtype methylase, recognizes the double-stranded sequence 5'-TCGA-3', methylates A-4 on both strands and protects the DNA from cleavage by the TthHB8I endonuclease. The sequence is that of Type II methyltransferase M.TthHB8I from Thermus thermophilus (strain ATCC 27634 / DSM 579 / HB8).